The primary structure comprises 94 residues: PqqA binding protein (94 aa).

Belongs to the PqqD family. In terms of assembly, monomer. Interacts with PqqE.

Its pathway is cofactor biosynthesis; pyrroloquinoline quinone biosynthesis. Its function is as follows. Functions as a PqqA binding protein and presents PqqA to PqqE, in the pyrroloquinoline quinone (PQQ) biosynthetic pathway. This is PqqA binding protein from Acinetobacter baumannii (strain AB307-0294).